An 846-amino-acid polypeptide reads, in one-letter code: DNA mismatch repair protein MutS (846 aa).

Position 610 to 617 (610 to 617 (GPNMGGKS)) interacts with ATP.

It belongs to the DNA mismatch repair MutS family.

Functionally, this protein is involved in the repair of mismatches in DNA. It is possible that it carries out the mismatch recognition step. This protein has a weak ATPase activity. This Legionella pneumophila (strain Paris) protein is DNA mismatch repair protein MutS.